Here is a 531-residue protein sequence, read N- to C-terminus: 2,3-bisphosphoglycerate-independent phosphoglycerate mutase (531 aa).

Residues Asp-13 and Ser-63 each coordinate Mn(2+). Catalysis depends on Ser-63, which acts as the Phosphoserine intermediate. Substrate is bound by residues His-124, 154–155 (RD), Arg-187, Arg-193, 261–264 (RPDR), and Lys-342. Mn(2+)-binding residues include Asp-420, His-424, Asp-462, His-463, and His-480.

It belongs to the BPG-independent phosphoglycerate mutase family. Monomer. Requires Mn(2+) as cofactor.

It carries out the reaction (2R)-2-phosphoglycerate = (2R)-3-phosphoglycerate. Its pathway is carbohydrate degradation; glycolysis; pyruvate from D-glyceraldehyde 3-phosphate: step 3/5. Catalyzes the interconversion of 2-phosphoglycerate and 3-phosphoglycerate. This chain is 2,3-bisphosphoglycerate-independent phosphoglycerate mutase, found in Mycoplasma capricolum subsp. capricolum (strain California kid / ATCC 27343 / NCTC 10154).